The sequence spans 233 residues: UPF0758 protein SRU_2338 (233 aa).

In terms of domain architecture, MPN spans glutamine 110–isoleucine 232. Zn(2+) contacts are provided by histidine 181, histidine 183, and aspartate 194. The JAMM motif signature appears at histidine 181–aspartate 194.

This sequence belongs to the UPF0758 family.

The sequence is that of UPF0758 protein SRU_2338 from Salinibacter ruber (strain DSM 13855 / M31).